The primary structure comprises 307 residues: Taste receptor type 2 member 106 (307 aa).

Topologically, residues 1–7 (MLTIPEG) are extracellular. The chain crosses the membrane as a helical span at residues 8–28 (ILLCFITSGSVLGVLGNGFIL). At 29–41 (HVNCTDCVRQKFS) the chain is on the cytoplasmic side. Residues 42–62 (TTGFIFTGLAISRICVICIII) traverse the membrane as a helical segment. Over 63–81 (SDGYLKLFSPHMVASDAHI) the chain is Extracellular. Residues 82-104 (IGISYLWIITNHTSTCFATILNL) form a helical membrane-spanning segment. Topologically, residues 105–124 (FYFLKIANFSHYIFFCLKRK) are cytoplasmic. A helical membrane pass occupies residues 125–145 (LNTIFIFLLGCLFISWSVAFP). Residues 146 to 179 (QTVKIFNDKMKHRNTSWKFHLHKSKFIINHILLN) lie on the Extracellular side of the membrane. Asparagine 159 is a glycosylation site (N-linked (GlcNAc...) asparagine). Residues 180–200 (LGVIFFCMVAIITSFLLIISL) traverse the membrane as a helical segment. Residues 201–227 (WKHNRKMQLYVSRFKSLNTEVHLKVMK) lie on the Cytoplasmic side of the membrane. Residues 228 to 248 (VLISFIILLILHVIGILIETL) traverse the membrane as a helical segment. At 249 to 257 (SFLRYENKL) the chain is on the extracellular side. A helical membrane pass occupies residues 258 to 278 (LLILGLNFSSMYPCCHSFILI). Over 279–307 (LANNQLKQASLKALKQFKCHKKDKDVRET) the chain is Cytoplasmic.

Belongs to the G-protein coupled receptor T2R family.

It is found in the membrane. In terms of biological role, putative taste receptor which may play a role in the perception of bitterness. In Rattus norvegicus (Rat), this protein is Taste receptor type 2 member 106.